The primary structure comprises 913 residues: Translation initiation factor IF-2 (913 aa).

The disordered stretch occupies residues 1–322 (MTDNNDDKTL…QEKFRRSQMQ (322 aa)). Low complexity predominate over residues 60–113 (VQPVVAAPKPAAPAPVAARPQAPQPRIHQPGGQQQRPGSSQSQQRSGSSAPQQR). A compositionally biased stretch (basic and acidic residues) spans 131–180 (MEARRRALMEAQARDVVEAKQRAEDEARRKVEEEQRIAAEKMEAANRAAE). Composition is skewed to low complexity over residues 181-195 (EAAA…PAAE), 203-238 (ERPA…AAAP), and 261-277 (PARG…PAAR). In terms of domain architecture, tr-type G spans 411–578 (SRPPVVTIMG…AILLQAEILD (168 aa)). The tract at residues 420–427 (GHVDHGKT) is G1. 420 to 427 (GHVDHGKT) lines the GTP pocket. The segment at 445–449 (GITQH) is G2. Residues 466–469 (DTPG) are G3. GTP contacts are provided by residues 466–470 (DTPGH) and 520–523 (NKID). The G4 stretch occupies residues 520–523 (NKID). The segment at 556–558 (SAK) is G5.

It belongs to the TRAFAC class translation factor GTPase superfamily. Classic translation factor GTPase family. IF-2 subfamily.

Its subcellular location is the cytoplasm. One of the essential components for the initiation of protein synthesis. Protects formylmethionyl-tRNA from spontaneous hydrolysis and promotes its binding to the 30S ribosomal subunits. Also involved in the hydrolysis of GTP during the formation of the 70S ribosomal complex. The polypeptide is Translation initiation factor IF-2 (Agrobacterium fabrum (strain C58 / ATCC 33970) (Agrobacterium tumefaciens (strain C58))).